A 1261-amino-acid chain; its full sequence is ABC-type transmembrane transporter verA (1261 aa).

Residues 41-61 traverse the membrane as a helical segment; that stretch reads IGCAFAAVCSGAAMPLMALIL. Residues 41–334 form the ABC transmembrane type-1 1 domain; the sequence is IGCAFAAVCS…LGPNMPSFIK (294 aa). N-linked (GlcNAc...) asparagine glycosylation is present at Asn67. 5 helical membrane passes run 92–112, 166–186, 190–210, 270–290, and 308–328; these read LWFV…SFGF, LGIM…AFSQ, LTLV…FIVS, FVGL…AIGF, and ILSV…LGPN. In terms of domain architecture, ABC transporter 1 spans 374–618; the sequence is VELRDMSFAY…GGLYKRLYDA (245 aa). An N-linked (GlcNAc...) asparagine glycan is attached at Asn396. ATP is bound at residue 409 to 416; sequence GPSGAGKS. A glycan (N-linked (GlcNAc...) asparagine) is linked at Asn463. Transmembrane regions (helical) follow at residues 686-706, 734-754, 808-828, 830-850, 913-933, and 950-970; these read YWPI…IFPV, LMFF…GFFM, MGLL…GLAY, WKFA…AGYL, VMTL…ALGF, and FFTV…LFGF. Positions 691-976 constitute an ABC transmembrane type-1 2 domain; that stretch reads LIGLVACVVT…LFGFSSNLGK (286 aa). N-linked (GlcNAc...) asparagine glycans are attached at residues Asn1007 and Asn1021. Residues 1017-1255 enclose the ABC transporter 2 domain; it reads VDMQNVTFAY…QGNYFKMHES (239 aa). An ATP-binding site is contributed by 1052–1059; sequence GTSGSGKS. Residue Asn1106 is glycosylated (N-linked (GlcNAc...) asparagine).

This sequence belongs to the ABC transporter superfamily. ABCB family. Multidrug resistance exporter (TC 3.A.1.201) subfamily.

Its subcellular location is the cell membrane. ABC-type transmembrane transporter; part of the gene cluster that mediates the biosynthesis of 11'-deoxyverticillin A, one of the dimeric epipolythiodioxopiperazines (ETPs) from the verticillin family that are toxic secondary metabolites. The verA multidrug transporter is probably involved in the secretion of 11'-deoxyverticillin A. The sequence is that of ABC-type transmembrane transporter verA from Clonostachys rogersoniana.